The sequence spans 111 residues: Antirepressor protein CarS (111 aa).

Monomer. Interacts with CarA and CarH.

Its function is as follows. Involved in carotenoid biosynthesis. Antagonizes the transcriptional repressor proteins CarA and CarH by preventing their binding to DNA. Can also dissociate preformed CarA-DNA complexes. Does not bind DNA. The chain is Antirepressor protein CarS (carS) from Myxococcus xanthus.